The chain runs to 313 residues: Acetaldehyde dehydrogenase (313 aa).

12–15 (SGNI) lines the NAD(+) pocket. The active-site Acyl-thioester intermediate is the C132. NAD(+) contacts are provided by residues 163 to 171 (SAGPGTRAN) and N291.

Belongs to the acetaldehyde dehydrogenase family.

The catalysed reaction is acetaldehyde + NAD(+) + CoA = acetyl-CoA + NADH + H(+). The sequence is that of Acetaldehyde dehydrogenase (bphG) from Burkholderia cepacia (Pseudomonas cepacia).